The sequence spans 21 residues: Ocellatin-2 (21 aa).

I21 is subject to Isoleucine amide.

As to expression, expressed by the skin dorsal glands.

It is found in the secreted. In terms of biological role, has hemolytic activity against human erythrocytes and antibacterial activity against the Gram-negative bacterium E.coli. This chain is Ocellatin-2, found in Leptodactylus ocellatus (Argus frog).